The primary structure comprises 76 residues: Short coiled-coil protein B (76 aa).

Positions 6–52 (ENQVELEEKTRLINQVLELQNTLEDLSARVDAVKEENLKLKSENQVL) form a coiled coil.

This sequence belongs to the SCOC family.

The protein localises to the golgi apparatus membrane. Its subcellular location is the golgi apparatus. It is found in the trans-Golgi network. The protein resides in the cytoplasm. It localises to the cytosol. Functionally, positive regulator of amino acid starvation-induced autophagy. In Danio rerio (Zebrafish), this protein is Short coiled-coil protein B (scocb).